The following is a 69-amino-acid chain: Omega-oxotoxin-Ol1a (69 aa).

One can recognise an Oxytoxin-type inhibitor cystine knot (ICK) domain in the interval aspartate 1–lysine 68. Disulfide bonds link cysteine 4/cysteine 18, cysteine 11/cysteine 23, cysteine 15/cysteine 64, cysteine 17/cysteine 52, and cysteine 25/cysteine 50. Asparagine 69 is subject to Asparagine amide.

It belongs to the spiderine family. Spiderine subfamily. In terms of tissue distribution, expressed by the venom gland.

Its subcellular location is the secreted. Weak blocker of vertebrate P/Q-, N- and L-type voltage-gated calcium channels (Cav1 and Cav2). Is both paralytic and lethal when injected into lepidopteran larvae. Is not toxic to mice. The protein is Omega-oxotoxin-Ol1a of Oxyopes lineatus (Lynx spider).